Consider the following 586-residue polypeptide: Phosphatidylinositol-3-phosphatase SAC1-A (586 aa).

The Cytoplasmic segment spans residues 1–519 (MANAYERFNL…TPLHVKKDWK (519 aa)). Positions 121–450 (INNVLNTDGF…ANACAKQYAG (330 aa)) constitute an SAC domain. The interval 451-586 (TGALKTDFTR…PKLVQKEKMD (136 aa)) is essential for phosphatidylinositol-4-phosphate phosphatase activity. Residues 520 to 540 (FLLLPVIMVVAFSMCIICLLM) form a helical membrane-spanning segment. Residues 541 to 547 (AGDTWTE) lie on the Lumenal side of the membrane. Residues 548–568 (TLAYVLFWGMASALTAAVIVV) form a helical membrane-spanning segment. Residues 569–586 (NGREFVDAPKLVQKEKMD) lie on the Cytoplasmic side of the membrane.

It is found in the endoplasmic reticulum membrane. The protein localises to the golgi apparatus membrane. It carries out the reaction a 1,2-diacyl-sn-glycero-3-phospho-(1D-myo-inositol-3-phosphate) + H2O = a 1,2-diacyl-sn-glycero-3-phospho-(1D-myo-inositol) + phosphate. The catalysed reaction is a 1,2-diacyl-sn-glycero-3-phospho-(1D-myo-inositol 4-phosphate) + H2O = a 1,2-diacyl-sn-glycero-3-phospho-(1D-myo-inositol) + phosphate. In terms of biological role, phosphoinositide phosphatase which catalyzes the hydrolysis of phosphatidylinositol 4-phosphate (PtdIns(4)P), phosphatidylinositol 3-phosphate (PtdIns(3)P) and has low activity towards phosphatidylinositol-3,5-bisphosphate (PtdIns(3,5)P2). The polypeptide is Phosphatidylinositol-3-phosphatase SAC1-A (sacm1la) (Danio rerio (Zebrafish)).